The primary structure comprises 498 residues: Ribulose bisphosphate carboxylase large chain (498 aa).

The propeptide occupies 1-2 (MS). Proline 3 carries the N-acetylproline modification. The residue at position 14 (lysine 14) is an N6,N6,N6-trimethyllysine. Residues asparagine 123 and threonine 173 each coordinate substrate. The active-site Proton acceptor is lysine 175. Lysine 177 is a binding site for substrate. Positions 201, 203, and 204 each coordinate Mg(2+). N6-carboxylysine is present on lysine 201. Catalysis depends on histidine 294, which acts as the Proton acceptor. Arginine 295, histidine 327, and serine 379 together coordinate substrate. The disordered stretch occupies residues 473 to 498 (DTLDPNDKKQRDNEDTLADKFFGDKG).

It belongs to the RuBisCO large chain family. Type I subfamily. In terms of assembly, heterohexadecamer of 8 large chains and 8 small chains; disulfide-linked. The disulfide link is formed within the large subunit homodimers. Requires Mg(2+) as cofactor. In terms of processing, the disulfide bond which can form in the large chain dimeric partners within the hexadecamer appears to be associated with oxidative stress and protein turnover.

The protein localises to the plastid. The enzyme catalyses 2 (2R)-3-phosphoglycerate + 2 H(+) = D-ribulose 1,5-bisphosphate + CO2 + H2O. It catalyses the reaction D-ribulose 1,5-bisphosphate + O2 = 2-phosphoglycolate + (2R)-3-phosphoglycerate + 2 H(+). In terms of biological role, ruBisCO catalyzes two reactions: the carboxylation of D-ribulose 1,5-bisphosphate, the primary event in carbon dioxide fixation, as well as the oxidative fragmentation of the pentose substrate in the photorespiration process. Both reactions occur simultaneously and in competition at the same active site. This is Ribulose bisphosphate carboxylase large chain from Cuscuta exaltata (Tall dodder).